The following is a 154-amino-acid chain: Ubiquitin-like protein 4A-A (154 aa).

The 76-residue stretch at 1–76 (MILTVKPLQG…LNLVVRPAGE (76 aa)) folds into the Ubiquitin-like domain.

In terms of assembly, component of the BAT3 complex.

The protein localises to the cytoplasm. It is found in the cytosol. Its function is as follows. Component of the BAT3 complex, a multiprotein complex involved in the post-translational delivery of tail-anchored (TA) membrane proteins to the endoplasmic reticulum membrane. TA membrane proteins, also named type II transmembrane proteins, contain a single C-terminal transmembrane region. The sequence is that of Ubiquitin-like protein 4A-A (ubl4aa) from Oncorhynchus mykiss (Rainbow trout).